Here is a 184-residue protein sequence, read N- to C-terminus: ATP synthase subunit b (184 aa).

Residues 16–36 (LIPPIPELVIGLIAFVIVFGF) traverse the membrane as a helical segment.

This sequence belongs to the ATPase B chain family. In terms of assembly, F-type ATPases have 2 components, F(1) - the catalytic core - and F(0) - the membrane proton channel. F(1) has five subunits: alpha(3), beta(3), gamma(1), delta(1), epsilon(1). F(0) has three main subunits: a(1), b(2) and c(10-14). The alpha and beta chains form an alternating ring which encloses part of the gamma chain. F(1) is attached to F(0) by a central stalk formed by the gamma and epsilon chains, while a peripheral stalk is formed by the delta and b chains.

It is found in the cell membrane. Its function is as follows. F(1)F(0) ATP synthase produces ATP from ADP in the presence of a proton or sodium gradient. F-type ATPases consist of two structural domains, F(1) containing the extramembraneous catalytic core and F(0) containing the membrane proton channel, linked together by a central stalk and a peripheral stalk. During catalysis, ATP synthesis in the catalytic domain of F(1) is coupled via a rotary mechanism of the central stalk subunits to proton translocation. Functionally, component of the F(0) channel, it forms part of the peripheral stalk, linking F(1) to F(0). This chain is ATP synthase subunit b, found in Streptomyces coelicolor (strain ATCC BAA-471 / A3(2) / M145).